A 400-amino-acid polypeptide reads, in one-letter code: Iron(III) enterobactin esterase (400 aa).

This sequence belongs to the Fes family.

It localises to the cytoplasm. It carries out the reaction Fe(III)-enterobactin + 3 H2O + H(+) = Fe(III)-[N-(2,3-dihydroxybenzoyl)-L-serine] + 2 N-(2,3-dihydroxybenzoyl)-L-serine. It catalyses the reaction Fe(III)-enterobactin + H2O = Fe(III)-[N-(2,3-dihydroxybenzoyl)-L-serine]3 + H(+). The enzyme catalyses Fe(III)-[N-(2,3-dihydroxybenzoyl)-L-serine]3 + H2O + H(+) = Fe(III)-[N-(2,3-dihydroxybenzoyl)-L-serine]2 + N-(2,3-dihydroxybenzoyl)-L-serine. The catalysed reaction is Fe(III)-[N-(2,3-dihydroxybenzoyl)-L-serine]2 + H2O + H(+) = Fe(III)-[N-(2,3-dihydroxybenzoyl)-L-serine] + N-(2,3-dihydroxybenzoyl)-L-serine. It carries out the reaction enterobactin + 3 H2O = 3 N-(2,3-dihydroxybenzoyl)-L-serine + 2 H(+). Functionally, catalyzes the hydrolysis of ferric enterobactin (Fe-Ent). Is responsible for the release of iron from ferric enterobactin. Also catalyzes the hydrolysis of iron-free enterobactin (Ent). Hydrolyzes ferric monoglucosyl-C-Ent (Fe-MGE) poorly and does not hydrolyze ferric diglucosyl-C-Ent (Fe-DGE) or ferric triglucosyl-C-Ent (Fe-TGE) at all. Also hydrolyzes apo MGE, but catalyzes the hydrolysis of apo DGE very poorly, and does not process apo TGE at all. The catalytic efficiency for processing Fe-Ent is much higher than that for apo Ent, suggesting that Fe-Ent is the physiological substrate. This chain is Iron(III) enterobactin esterase, found in Escherichia coli O6:H1 (strain CFT073 / ATCC 700928 / UPEC).